An 89-amino-acid chain; its full sequence is Transcription elongation factor 1 homolog (89 aa).

Residues C25, C28, C49, and C52 each coordinate Zn(2+).

This sequence belongs to the ELOF1 family.

It is found in the nucleus. Its function is as follows. Transcription elongation factor implicated in the maintenance of proper chromatin structure in actively transcribed regions. This chain is Transcription elongation factor 1 homolog, found in Oryza sativa subsp. japonica (Rice).